The sequence spans 874 residues: Valine--tRNA ligase (874 aa).

Positions 46-56 (PNVTGHLHIGH) match the 'HIGH' region motif. The 'KMSKS' region motif lies at 523–527 (KMSKS). ATP is bound at residue K526. Positions 805 to 874 (DYVFQMKKAS…TLTDLKQKVK (70 aa)) form a coiled coil.

This sequence belongs to the class-I aminoacyl-tRNA synthetase family. ValS type 1 subfamily. Monomer.

The protein resides in the cytoplasm. The catalysed reaction is tRNA(Val) + L-valine + ATP = L-valyl-tRNA(Val) + AMP + diphosphate. Functionally, catalyzes the attachment of valine to tRNA(Val). As ValRS can inadvertently accommodate and process structurally similar amino acids such as threonine, to avoid such errors, it has a 'posttransfer' editing activity that hydrolyzes mischarged Thr-tRNA(Val) in a tRNA-dependent manner. The protein is Valine--tRNA ligase of Ureaplasma parvum serovar 3 (strain ATCC 700970).